The following is a 132-amino-acid chain: uncharacterized protein (132 aa).

It to M.jannaschii MJ0661.

This is an uncharacterized protein from Helicobacter pylori (strain J99 / ATCC 700824) (Campylobacter pylori J99).